The sequence spans 258 residues: Imidazole glycerol phosphate synthase subunit HisF (258 aa).

Catalysis depends on residues aspartate 11 and aspartate 130.

This sequence belongs to the HisA/HisF family. Heterodimer of HisH and HisF.

The protein resides in the cytoplasm. The enzyme catalyses 5-[(5-phospho-1-deoxy-D-ribulos-1-ylimino)methylamino]-1-(5-phospho-beta-D-ribosyl)imidazole-4-carboxamide + L-glutamine = D-erythro-1-(imidazol-4-yl)glycerol 3-phosphate + 5-amino-1-(5-phospho-beta-D-ribosyl)imidazole-4-carboxamide + L-glutamate + H(+). The protein operates within amino-acid biosynthesis; L-histidine biosynthesis; L-histidine from 5-phospho-alpha-D-ribose 1-diphosphate: step 5/9. Functionally, IGPS catalyzes the conversion of PRFAR and glutamine to IGP, AICAR and glutamate. The HisF subunit catalyzes the cyclization activity that produces IGP and AICAR from PRFAR using the ammonia provided by the HisH subunit. The chain is Imidazole glycerol phosphate synthase subunit HisF from Rhodopseudomonas palustris (strain BisB18).